The following is a 748-amino-acid chain: MSKTWGILMLSVLSAPSLAETELTHKFCGTSMQTRAWQPLPGLKLGMVDIRANDVELLGTQSAEFTGNVDINTVNMSLSAQTALIDKQRGLLNATGPITYRDKISEVNSTGLNADLNNSAISLLGAQYSLTQQLGKGGAEKLTVDESGLMLMNASFTACPGEVPVWAIEADEINLSREEGWGETYNAVLRILDTPVLYLPYFTFPLDERRKSGLLTPSFSSSDRYGLETITPYYWNIAPNLDATITPRYMSRKGLQLQTEFRYLTQEHEGLVGIEYLNKDDSDPDLGDRYMFHWQQKSYLGENWRANVDITNVSDDNYLTDLDSNYASKTDTQLYRTGSLTHMGDTWRTDITVQNFEVLGDHLESYTALPQISFTQTAPWQYDNFDFSVSGEVSHFTNSSAIIDQATRIHIEPKARFDYKEHAWSFLSEVSILQTNYKQHGDLEGTQYSESVSRTLPKVRLYTQLNFERETSYFIDDGIQTLEPQLQYLYTPNEDQSDIGLFDTAKLQDDFFGLFRDTRFSGVDRIAAANQFTLGATTRLFDKKHQEVFNFSAGQIFYLSDSAKPTEQGLNSDTNYNALFAAQTMVHWHRRWYLSAGIQYDTDGKQIIQSNVTLDYKGDDNELVQLNHRYSDDVSGNAIEQTGLFTSIPVSDEWQFIASYHRDLENNRSIEVLSGLQYESCCWAFQITGHRQIVTDLNQSIGQQQATFDSSIRLNFVLKGLGSKSRYDAKKLLQQGIFGYRRPYFLND.

A signal peptide spans 1 to 19 (MSKTWGILMLSVLSAPSLA).

This sequence belongs to the LptD family. Component of the lipopolysaccharide transport and assembly complex. Interacts with LptE and LptA.

The protein resides in the cell outer membrane. Its function is as follows. Together with LptE, is involved in the assembly of lipopolysaccharide (LPS) at the surface of the outer membrane. This Pseudoalteromonas translucida (strain TAC 125) protein is LPS-assembly protein LptD.